We begin with the raw amino-acid sequence, 396 residues long: Methionine import ATP-binding protein MetN 2 (396 aa).

The region spanning 41–280 (VSFELVGKVF…PRHGATRALL (240 aa)) is the ABC transporter domain. 77-84 (GRSGAGKS) lines the ATP pocket.

It belongs to the ABC transporter superfamily. Methionine importer (TC 3.A.1.24) family. In terms of assembly, the complex is composed of two ATP-binding proteins (MetN), two transmembrane proteins (MetI) and a solute-binding protein (MetQ).

It is found in the cell inner membrane. It carries out the reaction L-methionine(out) + ATP + H2O = L-methionine(in) + ADP + phosphate + H(+). The enzyme catalyses D-methionine(out) + ATP + H2O = D-methionine(in) + ADP + phosphate + H(+). Part of the ABC transporter complex MetNIQ involved in methionine import. Responsible for energy coupling to the transport system. The sequence is that of Methionine import ATP-binding protein MetN 2 from Burkholderia mallei (strain ATCC 23344).